The chain runs to 63 residues: Lysis protein (63 aa).

Residues 21 to 43 (LYVWIALAIVLSDFTSIFSHWIW) form a helical membrane-spanning segment.

Belongs to the Leviviricetes lysis protein family.

It is found in the host cell inner membrane. The protein localises to the host cell outer membrane. Functionally, induces the formation of specific membrane adhesion sites between the inner and outer membranes, apparently leading to host cell lysis. Lysis may be performed via activation of host murein hydrolases. This Escherichia coli (Bacteriophage GA) protein is Lysis protein.